The sequence spans 194 residues: RNA polymerase II subunit A C-terminal domain phosphatase SSU72 like protein 3 (194 aa).

The protein belongs to the SSU72 phosphatase family.

Its subcellular location is the nucleus. The enzyme catalyses O-phospho-L-seryl-[protein] + H2O = L-seryl-[protein] + phosphate. It catalyses the reaction O-phospho-L-threonyl-[protein] + H2O = L-threonyl-[protein] + phosphate. Its function is as follows. Protein phosphatase that catalyzes the dephosphorylation of the C-terminal domain of RNA polymerase II. Plays a role in RNA processing and termination. The sequence is that of RNA polymerase II subunit A C-terminal domain phosphatase SSU72 like protein 3 from Homo sapiens (Human).